Consider the following 642-residue polypeptide: Acid beta-fructofuranosidase (642 aa).

The Cytoplasmic segment spans residues 1 to 22 (MRNDSPYTPLLNASHNNHRRRE). A propeptide spans 1-95 (MRNDSPYTPL…LSGNLVGEGG (95 aa)) (removed in mature form). The helical; Signal-anchor for type II membrane protein transmembrane segment at 23–43 (LLLLFSGLLLLASIIAFSAYI) threads the bilayer. Residues 44 to 642 (AQPHADADVS…YHPDQKRQTS (599 aa)) lie on the Lumenal side of the membrane. Asn100 is a glycosylation site (N-linked (GlcNAc...) asparagine). Residues 119 to 122 (WMND), Gln138, Trp146, 181 to 182 (WT), and 245 to 246 (RD) contribute to the substrate site. Asp122 is a catalytic residue. An N-linked (GlcNAc...) asparagine glycan is attached at Asn267. Positions 300 and 333 each coordinate substrate. Cysteines 490 and 538 form a disulfide. N-linked (GlcNAc...) asparagine glycosylation is found at Asn491 and Asn615.

The protein belongs to the glycosyl hydrolase 32 family. May be present in two forms, a 70 kDa monomer and a heterodimer of the 30 kDa and 38 kDa subunits. The ratio of the levels of the two forms within cells appears to be regulated developmentally.

The protein localises to the membrane. Its subcellular location is the vacuole. It is found in the vacuole lumen. The catalysed reaction is Hydrolysis of terminal non-reducing beta-D-fructofuranoside residues in beta-D-fructofuranosides.. It participates in glycan biosynthesis; sucrose metabolism. This chain is Acid beta-fructofuranosidase (VCINV), found in Vicia faba (Broad bean).